Consider the following 315-residue polypeptide: Ribosomal RNA small subunit methyltransferase H (315 aa).

S-adenosyl-L-methionine-binding positions include 33–35, aspartate 53, phenylalanine 80, aspartate 101, and glutamine 108; that span reads AGH.

Belongs to the methyltransferase superfamily. RsmH family.

Its subcellular location is the cytoplasm. The enzyme catalyses cytidine(1402) in 16S rRNA + S-adenosyl-L-methionine = N(4)-methylcytidine(1402) in 16S rRNA + S-adenosyl-L-homocysteine + H(+). In terms of biological role, specifically methylates the N4 position of cytidine in position 1402 (C1402) of 16S rRNA. This Natranaerobius thermophilus (strain ATCC BAA-1301 / DSM 18059 / JW/NM-WN-LF) protein is Ribosomal RNA small subunit methyltransferase H.